A 469-amino-acid chain; its full sequence is MSTSAAPVPAQPAHPRSILRGHKAQVHAAAFVRNNERLVTGDADGFVVVWDLTIMRPRAVWRAHDDVLLGIGGWGTDRLITHGRDNKLIVWQLREADEDSLAKTLPVDPAAEDRPKPWLLYMLEISTMNFCTFSLCEMSSDPLSEDREALIAVPNTLSSEAIDIFHLPSQKREHTIRLGQSEGMVMALELFRVDGYFTVAVGYENGVALVAQQAERSETPVGTWNVRYRSKAHTQPVLSLDVSLGRDFFLTSSADSLLIKHPIPPPQTSVLKTAREDGTTSEGANASVIDSQPPALASRPPDAPVAAPPATPGKPMSLLSAALAREAAGDSAESPTRRTTQPSDTPPESTLLSEPVKVVNTKHAGQQGLRIRSDGRIFATAGWDSRVRVYSCKTMKELAVLKWHQVGCFAVAFSTIDAPAGTQAEGARDGLAARMGDVTVKEKRISHAKSAHWLAAGSKDGKVSLWEIY.

3 WD repeats span residues 21–60 (GHKAQVHAAAFVRNNERLVTGDADGFVVVWDLTIMRPRAV), 63–101 (AHDDVLLGIGGWGTDRLITHGRDNKLIVWQLREADEDSL), and 232–271 (AHTQPVLSLDVSLGRDFFLTSSADSLLIKHPIPPPQTSVL). The segment at 260–354 (KHPIPPPQTS…TPPESTLLSE (95 aa)) is disordered. The span at 280-290 (TSEGANASVID) shows a compositional bias: polar residues. The segment covering 301-312 (PDAPVAAPPATP) has biased composition (pro residues). Low complexity predominate over residues 313 to 332 (GKPMSLLSAALAREAAGDSA). Residues 333-352 (ESPTRRTTQPSDTPPESTLL) show a composition bias toward polar residues. 2 WD repeats span residues 361-400 (TKHAGQQGLRIRSDGRIFATAGWDSRVRVYSCKTMKELAV) and 437-469 (DVTVKEKRISHAKSAHWLAAGSKDGKVSLWEIY).

It belongs to the WD repeat ASA1 family. As to quaternary structure, component of the ASTRA chromatin remodeling machinery complex.

The protein resides in the nucleus. Component of the ASTRA complex involved in chromatin remodeling. The protein is ASTRA-associated protein 1 (asa1) of Pyricularia oryzae (strain 70-15 / ATCC MYA-4617 / FGSC 8958) (Rice blast fungus).